A 942-amino-acid polypeptide reads, in one-letter code: Inter-alpha-trypsin inhibitor heavy chain H5 (942 aa).

The N-terminal stretch at 1–16 is a signal peptide; sequence MLLLLGLCLGLSLCVG. In terms of domain architecture, VIT spans 35-161; it reads VPRQVRLLQR…KAAFFLSYEE (127 aa). N-linked (GlcNAc...) asparagine glycosylation is found at Asn97 and Asn127. Disordered regions lie at residues 116 to 136 and 208 to 227; these read KKSGDRVKEKRNKTTEENGEK and SRQRGSGRGEDDSGPPPSTV. N-linked (GlcNAc...) asparagine glycans are attached at residues Asn231, Asn421, and Asn508. In terms of domain architecture, VWFA spans 295–478; that stretch reads NVVFVLDSSA…SQLIGFYDEI (184 aa). Positions 550–571 are disordered; the sequence is QKAGKDVTGSPRPGGDGEGDTN. N-linked (GlcNAc...) asparagine glycosylation is found at Asn776, Asn795, and Asn862.

It belongs to the ITIH family. As to expression, abundantly expressed in placenta. Less abundant expression in mammary gland and ovary. Expression is barely detectable levels in all other tissues tested.

The protein localises to the secreted. May act as a tumor suppressor. The polypeptide is Inter-alpha-trypsin inhibitor heavy chain H5 (ITIH5) (Homo sapiens (Human)).